A 228-amino-acid chain; its full sequence is RNA pyrophosphohydrolase (228 aa).

Residues 1–70 are unknown; that stretch reads MEKRSGIGRL…KQWVKMMNDI (70 aa). The segment at 71–228 is rppH domain; sequence VIDKRGFRLG…VLTEFAEFIR (158 aa). A Nudix hydrolase domain is found at 76 to 221; the sequence is GFRLGVGMVI…KRDVYQKVLT (146 aa). Positions 109 to 130 match the Nudix box motif; it reads GGLLPNETLREALNRELDEEVG.

It in the C-terminal section; belongs to the Nudix hydrolase family. RppH subfamily. Requires a divalent metal cation as cofactor.

Functionally, accelerates the degradation of transcripts by removing pyrophosphate from the 5'-end of triphosphorylated RNA, leading to a more labile monophosphorylated state that can stimulate subsequent ribonuclease cleavage. This Coxiella burnetii (strain RSA 493 / Nine Mile phase I) protein is RNA pyrophosphohydrolase.